Consider the following 95-residue polypeptide: Aspartyl/glutamyl-tRNA(Asn/Gln) amidotransferase subunit C (95 aa).

The protein belongs to the GatC family. In terms of assembly, heterotrimer of A, B and C subunits.

The enzyme catalyses L-glutamyl-tRNA(Gln) + L-glutamine + ATP + H2O = L-glutaminyl-tRNA(Gln) + L-glutamate + ADP + phosphate + H(+). The catalysed reaction is L-aspartyl-tRNA(Asn) + L-glutamine + ATP + H2O = L-asparaginyl-tRNA(Asn) + L-glutamate + ADP + phosphate + 2 H(+). Functionally, allows the formation of correctly charged Asn-tRNA(Asn) or Gln-tRNA(Gln) through the transamidation of misacylated Asp-tRNA(Asn) or Glu-tRNA(Gln) in organisms which lack either or both of asparaginyl-tRNA or glutaminyl-tRNA synthetases. The reaction takes place in the presence of glutamine and ATP through an activated phospho-Asp-tRNA(Asn) or phospho-Glu-tRNA(Gln). The polypeptide is Aspartyl/glutamyl-tRNA(Asn/Gln) amidotransferase subunit C (Marinobacter nauticus (strain ATCC 700491 / DSM 11845 / VT8) (Marinobacter aquaeolei)).